A 359-amino-acid chain; its full sequence is DNA integrity scanning protein DisA (359 aa).

Residues 10–148 (ELDLLDIVQF…GNRRYTLKDI (139 aa)) enclose the DAC domain. Residues G77, L95, and 108–112 (MRHRT) contribute to the ATP site.

It belongs to the DisA family. In terms of assembly, homooctamer. Mg(2+) is required as a cofactor.

It carries out the reaction 2 ATP = 3',3'-c-di-AMP + 2 diphosphate. Participates in a DNA-damage check-point that is active prior to asymmetric division when DNA is damaged. DisA forms globular foci that rapidly scan along the chromosomes during sporulation, searching for lesions. When a lesion is present, DisA pauses at the lesion site. This triggers a cellular response that culminates in a temporary block in sporulation initiation. In terms of biological role, also has diadenylate cyclase activity, catalyzing the condensation of 2 ATP molecules into cyclic di-AMP (c-di-AMP). c-di-AMP acts as a signaling molecule that couples DNA integrity with progression of sporulation. The rise in c-di-AMP level generated by DisA while scanning the chromosome, operates as a positive signal that advances sporulation; upon encountering a lesion, the DisA focus arrests at the damaged site and halts c-di-AMP synthesis. The protein is DNA integrity scanning protein DisA of Bacillus pumilus (strain SAFR-032).